The chain runs to 127 residues: Glycine cleavage system H protein (127 aa).

Residues 22–104 (EVVIGITHFA…YEGAWMVKVE (83 aa)) form the Lipoyl-binding domain. Position 63 is an N6-lipoyllysine (Lys63).

It belongs to the GcvH family. In terms of assembly, the glycine cleavage system is composed of four proteins: P, T, L and H. The cofactor is (R)-lipoate.

In terms of biological role, the glycine cleavage system catalyzes the degradation of glycine. The H protein shuttles the methylamine group of glycine from the P protein to the T protein. Is also involved in protein lipoylation via its role as an octanoyl/lipoyl carrier protein intermediate. The sequence is that of Glycine cleavage system H protein from Bacillus cereus (strain ATCC 10987 / NRS 248).